Reading from the N-terminus, the 216-residue chain is MGQKINPLGFRLGTTQSHDSIWFAQPTKYSENIQEDKKIRDWIKNYIQKNRRISSGVEGIGEIKIQKRIDLIQVIIYMGFPKLLIEGKPQKIEELQTNMHKKLNCVNRKLNIAIVKVTNAYKHPNILAEFIAGQLKNRVSFRKAMKKAIELTEQAGTKGVQVQIAGRIDGKEIARVEWIREGRVPLQTIRAKIEYCCYTVRTIYGVLGIKVWIFSK.

Residues 43 to 118 (IKNYIQKNRR…KLNIAIVKVT (76 aa)) enclose the KH type-2 domain.

Belongs to the universal ribosomal protein uS3 family. In terms of assembly, part of the 30S ribosomal subunit.

It is found in the plastid. The protein localises to the chloroplast. This chain is Small ribosomal subunit protein uS3c (rps3), found in Phaseolus angularis (Azuki bean).